The sequence spans 110 residues: MGKNDLVKTLRMNYLFDFYQTLLTEKQRNYMELFYLRDYSLSEIAETFDVSRQAVYDNIRRTGDLVEDYEAKLNLYEKFEQRRKIYDDMKQTLNDSKKLEQYINQLEELE.

It belongs to the UPF0122 family.

Functionally, might take part in the signal recognition particle (SRP) pathway. This is inferred from the conservation of its genetic proximity to ftsY/ffh. May be a regulatory protein. This Staphylococcus haemolyticus (strain JCSC1435) protein is UPF0122 protein SH1678.